We begin with the raw amino-acid sequence, 264 residues long: Tropomyosin Cha f 1.0101 (264 aa).

Met-1 bears the N-acetylmethionine mark. Disordered regions lie at residues 1–56 (MDAI…VENE) and 92–126 (IQLP…SERM). Residues 1–264 (MDAIKKKMQA…RLEDELVNEK (264 aa)) are a coiled coil. Residues 12–45 (KLEKDNAMDRADTLEQQNKEANLRAEKTEEEIRA) show a composition bias toward basic and acidic residues.

This sequence belongs to the tropomyosin family. Homodimer. As to expression, expressed in muscle (at protein level). Expressed in claw muscles.

Tropomyosin, in association with the troponin complex, plays a central role in the calcium dependent regulation of muscle contraction. The chain is Tropomyosin Cha f 1.0101 from Charybdis feriata (Crucifix crab).